A 215-amino-acid polypeptide reads, in one-letter code: Large ribosomal subunit protein uL4 (215 aa).

The tract at residues 46 to 72 is disordered; the sequence is TAKSKNRAEVSGGGRKPWAQKGGGRAR. Residues 56 to 71 show a composition bias toward gly residues; the sequence is SGGGRKPWAQKGGGRA.

This sequence belongs to the universal ribosomal protein uL4 family. As to quaternary structure, part of the 50S ribosomal subunit.

Its function is as follows. One of the primary rRNA binding proteins, this protein initially binds near the 5'-end of the 23S rRNA. It is important during the early stages of 50S assembly. It makes multiple contacts with different domains of the 23S rRNA in the assembled 50S subunit and ribosome. Forms part of the polypeptide exit tunnel. In Helicobacter pylori (strain G27), this protein is Large ribosomal subunit protein uL4.